A 77-amino-acid chain; its full sequence is Small ribosomal subunit protein uS17 (77 aa).

It belongs to the universal ribosomal protein uS17 family. As to quaternary structure, part of the 30S ribosomal subunit.

Its function is as follows. One of the primary rRNA binding proteins, it binds specifically to the 5'-end of 16S ribosomal RNA. The sequence is that of Small ribosomal subunit protein uS17 from Anaplasma marginale (strain St. Maries).